The chain runs to 598 residues: Chaperone protein DnaK (598 aa).

Position 180 is a phosphothreonine; by autocatalysis (Thr180).

The protein belongs to the heat shock protein 70 family.

In terms of biological role, acts as a chaperone. This Thermosipho africanus (strain TCF52B) protein is Chaperone protein DnaK.